Here is a 113-residue protein sequence, read N- to C-terminus: Protein translation factor SUI1 homolog (113 aa).

This sequence belongs to the SUI1 family.

Probably involved in translation. This chain is Protein translation factor SUI1 homolog, found in Salix bakko (Japanese willow).